The sequence spans 239 residues: Vesicle-associated protein 1-2 (239 aa).

Met-1 carries the N-acetylmethionine modification. At 1–215 (MSNELLTIDP…RRESKRSKSG (215 aa)) the chain is on the cytoplasmic side. N-acetylserine; in Vesicle-associated protein 1-2, N-terminally processed is present on Ser-2. Residues 5 to 125 (LLTIDPVDLQ…EETKLRVVYV (121 aa)) form the MSP domain. A disordered region spans residues 123–174 (VYVAPPRPPSPVREGSEEGSSPRASVSDNGNASDFTAAPRFSADRVDAQDNS). Ser-132 is modified (phosphoserine). A compositionally biased stretch (polar residues) spans 140–156 (EGSSPRASVSDNGNASD). A Phosphoserine modification is found at Ser-164. A coiled-coil region spans residues 169 to 215 (DAQDNSSEARALVTKLTEEKNSAVQLNNRLQQELDQLRRESKRSKSG). A helical; Anchor for type IV membrane protein transmembrane segment spans residues 216 to 236 (GIPFMYVLLVGLIGLILGYIM).

Belongs to the VAMP-associated protein (VAP) (TC 9.B.17) family. As to quaternary structure, interacts with ORP3A. Binds to VLG at the endomembrane system.

Its subcellular location is the endoplasmic reticulum membrane. Functionally, vesicle-associated protein that binds the oxysterol-binding protein ORP3A and allows its targeting to the ER. The chain is Vesicle-associated protein 1-2 from Arabidopsis thaliana (Mouse-ear cress).